A 283-amino-acid polypeptide reads, in one-letter code: Probable endonuclease 4 (283 aa).

Residues His67, His107, Glu144, Asp178, His181, His215, Asp228, His230, and Glu260 each coordinate Zn(2+).

Belongs to the AP endonuclease 2 family. The cofactor is Zn(2+).

The enzyme catalyses Endonucleolytic cleavage to 5'-phosphooligonucleotide end-products.. Functionally, endonuclease IV plays a role in DNA repair. It cleaves phosphodiester bonds at apurinic or apyrimidinic (AP) sites, generating a 3'-hydroxyl group and a 5'-terminal sugar phosphate. In Citrifermentans bemidjiense (strain ATCC BAA-1014 / DSM 16622 / JCM 12645 / Bem) (Geobacter bemidjiensis), this protein is Probable endonuclease 4.